Reading from the N-terminus, the 320-residue chain is Methionyl-tRNA formyltransferase (320 aa).

Position 111 to 114 (111 to 114 (SLLP)) interacts with (6S)-5,6,7,8-tetrahydrofolate.

This sequence belongs to the Fmt family.

The catalysed reaction is L-methionyl-tRNA(fMet) + (6R)-10-formyltetrahydrofolate = N-formyl-L-methionyl-tRNA(fMet) + (6S)-5,6,7,8-tetrahydrofolate + H(+). Its function is as follows. Attaches a formyl group to the free amino group of methionyl-tRNA(fMet). The formyl group appears to play a dual role in the initiator identity of N-formylmethionyl-tRNA by promoting its recognition by IF2 and preventing the misappropriation of this tRNA by the elongation apparatus. This chain is Methionyl-tRNA formyltransferase, found in Methylacidiphilum infernorum (isolate V4) (Methylokorus infernorum (strain V4)).